The primary structure comprises 101 residues: Small ribosomal subunit protein uS14 (101 aa).

It belongs to the universal ribosomal protein uS14 family. As to quaternary structure, part of the 30S ribosomal subunit. Contacts proteins S3 and S10.

Binds 16S rRNA, required for the assembly of 30S particles and may also be responsible for determining the conformation of the 16S rRNA at the A site. This is Small ribosomal subunit protein uS14 from Shewanella halifaxensis (strain HAW-EB4).